The sequence spans 533 residues: MFNRIRISTTLFLILILCGILQIGSNGMSFWAFRDDLQRLNQVEQSNQQRAALAQTRAVMLQASTALNKAGTLTALSYPADDIKTLMTTARASLTQSTTLFKSFMAMTAGNEHVRGLQKETEKSFARWHNDLEHQATWLESNQLSDFLTAPVQGSQNAFDVNFEAWQLEINHVLEAASAQSQRNYQISALVFISMIIVAAIYISSALWWTRKMIVQPLAIIGSHFDSIAAGNLARPIAVYGRNEITAIFASLKTMQQALRGTVSDVRKGSQEMHIGIAEIVAGNNDLSSRTEQQAASLAQTAASMEQLTATVGQNADNARQASELAKNAATTAQAGGVQVSTMTHTMQEIATSSQKIGDIISVIDGIAFQTNILALNAAVEAARAGEQGRGFAVVAGEVRNLASRSAQAAKEIKGLIEESVNRVQQGSKLVNNAAATMIDIVSSVTRVNDIMGEIASASEEQQRGIEQVAQAVSQMDQVTQQNASLVEEAAVATEQLANQADHLSSRVAVFTLEEHEVARHESVQLQIAPVVS.

Over 1–6 (MFNRIR) the chain is Cytoplasmic. Residues 7–33 (ISTTLFLILILCGILQIGSNGMSFWAF) traverse the membrane as a helical segment. The Periplasmic portion of the chain corresponds to 34 to 188 (RDDLQRLNQV…AQSQRNYQIS (155 aa)). The chain crosses the membrane as a helical span at residues 189 to 209 (ALVFISMIIVAAIYISSALWW). The Cytoplasmic portion of the chain corresponds to 210 to 533 (TRKMIVQPLA…VQLQIAPVVS (324 aa)). Residues 212–264 (KMIVQPLAIIGSHFDSIAAGNLARPIAVYGRNEITAIFASLKTMQQALRGTVS) enclose the HAMP domain. A Methyl-accepting transducer domain is found at 269 to 498 (GSQEMHIGIA…EAAVATEQLA (230 aa)). 3 positions are modified to glutamate methyl ester (Gln): Gln-293, Gln-300, and Gln-307. Glutamate methyl ester (Glu) is present on Glu-489.

The protein belongs to the methyl-accepting chemotaxis (MCP) protein family.

The protein localises to the cell inner membrane. In terms of biological role, mediates taxis toward dipeptides via an interaction with the periplasmic dipeptide-binding protein. Its function is as follows. Chemotactic-signal transducers respond to changes in the concentration of attractants and repellents in the environment, transduce a signal from the outside to the inside of the cell, and facilitate sensory adaptation through the variation of the level of methylation. Attractants increase the level of methylation while repellents decrease the level of methylation, the methyl groups are added by the methyltransferase CheR and removed by the methylesterase CheB. The polypeptide is Methyl-accepting chemotaxis protein IV (tap) (Escherichia coli (strain K12)).